Here is a 66-residue protein sequence, read N- to C-terminus: Large ribosomal subunit protein bL31 (66 aa).

Zn(2+) contacts are provided by C16, C18, C36, and C39.

It belongs to the bacterial ribosomal protein bL31 family. Type A subfamily. As to quaternary structure, part of the 50S ribosomal subunit. It depends on Zn(2+) as a cofactor.

Functionally, binds the 23S rRNA. The chain is Large ribosomal subunit protein bL31 from Clostridioides difficile (strain 630) (Peptoclostridium difficile).